A 333-amino-acid polypeptide reads, in one-letter code: Electron transfer flavoprotein subunit alpha, mitochondrial (333 aa).

The transit peptide at 1–19 (MFRAAAPGQLRRAASLLRF) directs the protein to the mitochondrion. The domain I stretch occupies residues 20–204 (QSTLVIAEHA…GISEWLDQKL (185 aa)). Position 59 is an N6-acetyllysine; alternate (K59). K59 is subject to N6-succinyllysine; alternate. K62 carries the post-translational modification N6-acetyllysine. K69 carries the N6-acetyllysine; alternate modification. Position 69 is an N6-succinyllysine; alternate (K69). N6-acetyllysine is present on K75. Residue K85 is modified to N6-acetyllysine; alternate. Residue K85 is modified to N6-succinyllysine; alternate. Phosphothreonine is present on T93. N6-acetyllysine occurs at positions 101 and 139. Position 140 is a phosphoserine (S140). An N6-acetyllysine; alternate modification is found at K158. K158 is subject to N6-succinyllysine; alternate. An N6-acetyllysine modification is found at K164. An N6-succinyllysine modification is found at K187. The residue at position 203 (K203) is an N6-acetyllysine; alternate. K203 is modified (N6-succinyllysine; alternate). The interval 205-333 (TKSDRPELTG…PEMTEILKKK (129 aa)) is domain II. K216 carries the post-translational modification N6-succinyllysine. R223 contacts FAD. 2 positions are modified to N6-acetyllysine; alternate: K226 and K232. An N6-succinyllysine; alternate mark is found at K226 and K232. FAD contacts are provided by residues S248, 263–266 (VGQT), 281–286 (SGAIQH), and N300. K301 bears the N6-succinyllysine mark. Position 318 to 319 (318 to 319 (DL)) interacts with FAD.

It belongs to the ETF alpha-subunit/FixB family. Heterodimer composed of ETFA and ETFB. Identified in a complex that contains ETFA, ETFB and ETFRF1. Interaction with ETFRF1 promotes dissociation of the bound FAD and loss of electron transfer activity. Interacts with TASOR. It depends on FAD as a cofactor.

Its subcellular location is the mitochondrion matrix. Its function is as follows. Heterodimeric electron transfer flavoprotein that accepts electrons from several mitochondrial dehydrogenases, including acyl-CoA dehydrogenases, glutaryl-CoA and sarcosine dehydrogenase. It transfers the electrons to the main mitochondrial respiratory chain via ETF-ubiquinone oxidoreductase (ETF dehydrogenase). Required for normal mitochondrial fatty acid oxidation and normal amino acid metabolism. This Rattus norvegicus (Rat) protein is Electron transfer flavoprotein subunit alpha, mitochondrial (Etfa).